We begin with the raw amino-acid sequence, 286 residues long: ATP phosphoribosyltransferase (286 aa).

The protein belongs to the ATP phosphoribosyltransferase family. Long subfamily. Requires Mg(2+) as cofactor.

The protein localises to the cytoplasm. It catalyses the reaction 1-(5-phospho-beta-D-ribosyl)-ATP + diphosphate = 5-phospho-alpha-D-ribose 1-diphosphate + ATP. The protein operates within amino-acid biosynthesis; L-histidine biosynthesis; L-histidine from 5-phospho-alpha-D-ribose 1-diphosphate: step 1/9. With respect to regulation, feedback inhibited by histidine. Its function is as follows. Catalyzes the condensation of ATP and 5-phosphoribose 1-diphosphate to form N'-(5'-phosphoribosyl)-ATP (PR-ATP). Has a crucial role in the pathway because the rate of histidine biosynthesis seems to be controlled primarily by regulation of HisG enzymatic activity. The sequence is that of ATP phosphoribosyltransferase from Cytophaga hutchinsonii (strain ATCC 33406 / DSM 1761 / CIP 103989 / NBRC 15051 / NCIMB 9469 / D465).